The sequence spans 696 residues: Glycine--tRNA ligase beta subunit (696 aa).

It belongs to the class-II aminoacyl-tRNA synthetase family. As to quaternary structure, tetramer of two alpha and two beta subunits.

The protein localises to the cytoplasm. The enzyme catalyses tRNA(Gly) + glycine + ATP = glycyl-tRNA(Gly) + AMP + diphosphate. The sequence is that of Glycine--tRNA ligase beta subunit from Oleidesulfovibrio alaskensis (strain ATCC BAA-1058 / DSM 17464 / G20) (Desulfovibrio alaskensis).